Reading from the N-terminus, the 443-residue chain is GTPase Der (443 aa).

2 consecutive EngA-type G domains span residues 3–167 and 176–349; these read PVIA…PEEK and IKIA…QSIQ. Residues 9–16, 56–60, 119–122, 182–189, 229–233, and 294–297 each bind GTP; these read GRPNVGKS, DTGGL, NKAD, DTAGI, and NKWD. Residues 350 to 434 form the KH-like domain; sequence QELTTGQLTR…PVHIKLKTDP (85 aa).

The protein belongs to the TRAFAC class TrmE-Era-EngA-EngB-Septin-like GTPase superfamily. EngA (Der) GTPase family. Associates with the 50S ribosomal subunit.

Functionally, GTPase that plays an essential role in the late steps of ribosome biogenesis. The polypeptide is GTPase Der (Coxiella burnetii (strain CbuK_Q154) (Coxiella burnetii (strain Q154))).